Consider the following 410-residue polypeptide: MRLLKTHPILGLANSYLIDSPQPSNISYMWNFGSLLGVCLIIQILTGVFLAMHYTPSVDLAFISVEHIMRDVNYGWLIRYLHANTASFFFIFVYLHIGRGLYYGSYKSPRTLLWSIGVIILVLMMAIAFLGFNGQKYMCFYNIDITIIQYLSIPTLITPSTRLKPILDKHNIKPVLLFENLTNSETKKIAYQALKPFSGIYMIVNLITEKYYVGSAVTGNLYMRFHKHLFSFTGNKRVANAVNKYGLSEFAFLVLEIVPQKDKIDSTLLLNREDYYLETLKPEYNIAPLASNSLGWKHSEESLAKMRENYSEERRQQVANINKGKTLSEETRELIRKSALLRKSMSSETRMKCAVNVQPVTIINLDGTNIMNFVSIKEASIAISCNEKTIRRALNGNGIVKKNYIVKVIK.

Residues 1–131 (MRLLKTHPIL…VLMMAIAFLG (131 aa)) are COB exon 1 encoded. Helical transmembrane passes span 32 to 52 (FGSL…FLAM), 75 to 95 (GWLI…FVYL), and 112 to 132 (LLWS…FLGF). The segment at 132 to 410 (FNGQKYMCFY…KKNYIVKVIK (279 aa)) is COB intron 1 encoded. The GIY-YIG domain occupies 196–286 (PFSGIYMIVN…LETLKPEYNI (91 aa)).

The protein to endonucleases of group I introns of fungi and phage. Post-translationally, the mature protein may arise from proteolytic cleavage of an in-frame translation of COB exon 1 plus intron 1, containing the bI1 open reading frame.

The protein localises to the mitochondrion. It localises to the membrane. Its function is as follows. Mitochondrial DNA endonuclease involved in intron homing. The chain is Probable intron-encoded endonuclease bI1 (bI1) from Mycosarcoma maydis (Corn smut fungus).